The primary structure comprises 157 residues: Endoribonuclease YbeY (157 aa).

His122, His126, and His132 together coordinate Zn(2+).

Belongs to the endoribonuclease YbeY family. Requires Zn(2+) as cofactor.

The protein resides in the cytoplasm. Functionally, single strand-specific metallo-endoribonuclease involved in late-stage 70S ribosome quality control and in maturation of the 3' terminus of the 16S rRNA. The polypeptide is Endoribonuclease YbeY (Bacillus subtilis (strain 168)).